A 110-amino-acid polypeptide reads, in one-letter code: Large ribosomal subunit protein uL22 (110 aa).

It belongs to the universal ribosomal protein uL22 family. Part of the 50S ribosomal subunit.

This protein binds specifically to 23S rRNA; its binding is stimulated by other ribosomal proteins, e.g. L4, L17, and L20. It is important during the early stages of 50S assembly. It makes multiple contacts with different domains of the 23S rRNA in the assembled 50S subunit and ribosome. Its function is as follows. The globular domain of the protein is located near the polypeptide exit tunnel on the outside of the subunit, while an extended beta-hairpin is found that lines the wall of the exit tunnel in the center of the 70S ribosome. This chain is Large ribosomal subunit protein uL22, found in Photorhabdus laumondii subsp. laumondii (strain DSM 15139 / CIP 105565 / TT01) (Photorhabdus luminescens subsp. laumondii).